Reading from the N-terminus, the 361-residue chain is Nicotinate-nucleotide--dimethylbenzimidazole phosphoribosyltransferase (361 aa).

Glutamate 315 functions as the Proton acceptor in the catalytic mechanism.

This sequence belongs to the CobT family.

It carries out the reaction 5,6-dimethylbenzimidazole + nicotinate beta-D-ribonucleotide = alpha-ribazole 5'-phosphate + nicotinate + H(+). Its pathway is nucleoside biosynthesis; alpha-ribazole biosynthesis; alpha-ribazole from 5,6-dimethylbenzimidazole: step 1/2. In terms of biological role, catalyzes the synthesis of alpha-ribazole-5'-phosphate from nicotinate mononucleotide (NAMN) and 5,6-dimethylbenzimidazole (DMB). The sequence is that of Nicotinate-nucleotide--dimethylbenzimidazole phosphoribosyltransferase from Clostridium perfringens (strain 13 / Type A).